Reading from the N-terminus, the 532-residue chain is Phosphoenolpyruvate carboxykinase (ATP) (532 aa).

Residues Arg-60, Tyr-200, and Lys-206 each coordinate substrate. Residues Lys-206, His-225, and 242–250 (GLSGTGKTT) contribute to the ATP site. Mn(2+)-binding residues include Lys-206 and His-225. Ser-244 is a binding site for substrate. Asp-263 provides a ligand contact to Mn(2+). ATP contacts are provided by residues Glu-291, Arg-327, 443 to 444 (RI), and Thr-449. Residue Arg-327 coordinates substrate.

It belongs to the phosphoenolpyruvate carboxykinase (ATP) family. Monomer. The cofactor is Mn(2+).

It is found in the cytoplasm. The enzyme catalyses oxaloacetate + ATP = phosphoenolpyruvate + ADP + CO2. Its pathway is carbohydrate biosynthesis; gluconeogenesis. Inhibited by p-chloromercuribenzoate. Its function is as follows. Involved in gluconeogenesis. Catalyzes the conversion of oxaloacetate (OAA) to phosphoenolpyruvate (PEP) through direct phosphoryl transfer between the nucleoside triphosphate and OAA. The protein is Phosphoenolpyruvate carboxykinase (ATP) of Anaerobiospirillum succiniciproducens.